Here is a 316-residue protein sequence, read N- to C-terminus: Putative transketolase C-terminal section (316 aa).

Belongs to the transketolase family. Thiamine diphosphate serves as cofactor.

The catalysed reaction is D-sedoheptulose 7-phosphate + D-glyceraldehyde 3-phosphate = aldehydo-D-ribose 5-phosphate + D-xylulose 5-phosphate. The sequence is that of Putative transketolase C-terminal section from Methanocaldococcus jannaschii (strain ATCC 43067 / DSM 2661 / JAL-1 / JCM 10045 / NBRC 100440) (Methanococcus jannaschii).